Reading from the N-terminus, the 741-residue chain is MAETVSPLKHFVLAKKAITAIFGQLLEFVTEGSHFVEATYRNPELDRIASEDDLVEIQGYRNKLAVIGEVLSRRHMKVAFFGRTSSGKSSVINAMLWDKVLPSGIGHTTNCFLSVEGTDGDKAYLMTEGSDEKKSVKTVNQLAHALHMDKDLKAGCLVHVFWPKAKCALLRDDLVLVDSPGTDVTTELDIWIDKFCLDADVFVLVANSESTLMNTEKHFFHKVNERLSKPNIFILNNRWDASASEPEYMEDVRRQHMERCLHFLVEELKVVSPSEARNRIFFVSAKEVLNSRKHKAQGMPEGGGALAEGFQARLQEFQNFEQTFEECISQSAVKTKFEQHTIRAKQILDTVKNILDSVNVAAAEKRVYSMEEREDQIDRLDFIRNQMNLLTLDVKKKIKEVTEEVANKVSCAMTDEICRLSVLVDEFCSEFHPTPSVLKVYKSELNKHIEDGMGRNLADRCTNEVNASILQSQQEIIENLKPLLPAGIQNKLHTLIPCKKFDLSYDLNCHKLCSDFQEDIVFRFSLGWSSLVHRFLGSTNAQRVLLGLSEPIFQVPRSLASTPTAPSNPAAPDNAAQEELMITLITGLASLTSRTSMGIIVVGGVIWKTVGWKLISVTLSMYGALYLYERLTWTTRAKERAFKQQFVNYATEKLQMIVSFTSANCSHQVQQEMATTFARLCQQVDVTQKHLEEEIARLSKEIDQLEKIQNNSKLLRNKAVQLESELENFSKQFLHPSSGES.

Residues 1 to 584 (MAETVSPLKH…AAQEELMITL (584 aa)) lie on the Cytoplasmic side of the membrane. The part of a helix bundle domain, formed by helices from N-terminal and C-terminal regions stretch occupies residues 9–73 (KHFVLAKKAI…LAVIGEVLSR (65 aa)). In terms of domain architecture, Dynamin-type G spans 72-321 (SRRHMKVAFF…ARLQEFQNFE (250 aa)). The tract at residues 82–89 (GRTSSGKS) is G1 motif. 85-90 (SSGKSS) is a binding site for GTP. Positions 108–109 (TT) are G2 motif. The interval 178-181 (DSPG) is G3 motif. Residue 237–240 (NRWD) participates in GTP binding. The tract at residues 237-240 (NRWD) is G4 motif. Position 266 (Glu266) is a region of interest, G5 motif. GTP is bound by residues Ser284 and Lys286. Residues 338-364 (EQHTIRAKQILDTVKNILDSVNVAAAE) form a part of a helix bundle domain, formed by helices from N-terminal and C-terminal regions region. Residues 371 to 408 (EEREDQIDRLDFIRNQMNLLTLDVKKKIKEVTEEVANK) are a coiled coil. Residues 585–605 (ITGLASLTSRTSMGIIVVGGV) traverse the membrane as a helical segment. Residues 606-608 (IWK) are Mitochondrial intermembrane-facing. The chain crosses the membrane as a helical span at residues 609 to 629 (TVGWKLISVTLSMYGALYLYE). Residues 630-741 (RLTWTTRAKE…QFLHPSSGES (112 aa)) are Cytoplasmic-facing. A coiled-coil region spans residues 677 to 735 (FARLCQQVDVTQKHLEEEIARLSKEIDQLEKIQNNSKLLRNKAVQLESELENFSKQFLH). Residues 703–734 (DQLEKIQNNSKLLRNKAVQLESELENFSKQFL) form a part of a helix bundle domain, formed by helices from N-terminal and C-terminal regions region.

It belongs to the TRAFAC class dynamin-like GTPase superfamily. Dynamin/Fzo/YdjA family. Mitofusin subfamily. As to quaternary structure, homodimer, also in the absence of bound GTP. Forms higher oligomers in the presence of a transition state GTP analog. Forms homomultimers and heteromultimers with MFN2. Oligomerization is essential for mitochondrion fusion. Component of a high molecular weight multiprotein complex. Interacts with VAT1. Interacts with THG1L; THG1L probably functions as a guanyl-nucleotide exchange factor/GEF, activating MFN1. Ubiquitinated by MARCHF5. When mitochondria are depolarized and dysfunctional, it is ubiquitinated by a SCF (SKP1-CUL1-F-box protein) E3 ubiquitin-protein ligase complex that contains FBXO7 and PRKN. Ubiquitinated by non-degradative ubiquitin by PRKN, promoting mitochondrial fusion; deubiquitination by USP30 inhibits mitochondrial fusion. Detected in adult heart. Detected in embryos (at protein level). Widely expressed.

It is found in the mitochondrion outer membrane. It carries out the reaction GTP + H2O = GDP + phosphate + H(+). In terms of biological role, mitochondrial outer membrane GTPase that mediates mitochondrial clustering and fusion. Membrane clustering requires GTPase activity. It may involve a major rearrangement of the coiled coil domains. Mitochondria are highly dynamic organelles, and their morphology is determined by the equilibrium between mitochondrial fusion and fission events. Overexpression induces the formation of mitochondrial networks (in vitro). Has low GTPase activity. The protein is Mitofusin-1 (Mfn1) of Mus musculus (Mouse).